A 297-amino-acid chain; its full sequence is Acetylglutamate kinase (297 aa).

Substrate-binding positions include 73–74 (GG), R95, and N188.

Belongs to the acetylglutamate kinase family. ArgB subfamily.

It is found in the cytoplasm. The catalysed reaction is N-acetyl-L-glutamate + ATP = N-acetyl-L-glutamyl 5-phosphate + ADP. The protein operates within amino-acid biosynthesis; L-arginine biosynthesis; N(2)-acetyl-L-ornithine from L-glutamate: step 2/4. Its function is as follows. Catalyzes the ATP-dependent phosphorylation of N-acetyl-L-glutamate. The chain is Acetylglutamate kinase from Nostoc sp. (strain PCC 7120 / SAG 25.82 / UTEX 2576).